The sequence spans 757 residues: MKIQHIIHENQLGLLFQQGSFGLEKESQRVTADGAIVTTPHPAVFGNRRYHPYIQTDFAESQLELITPPTKKLEDTFRWLSVIHEVVQRSLPEEEYIFPLSMPAGLPAEEQIRVAQLDNPEDVAYREYLVKIYGKNKQMVSGIHYNFQLSPDLITRLFRLQNEYQSAVDFQNDLYLKMAKNFLRYQWILLYLLAATPTVESAYFKDGSPLAKGQFVRSLRSSQYGYVNDPEINVSFDSVEKYVESLEHWVSTGKLIAEKEFYSNVRLRGAKKAREFLTTGIQYLEFRLFDLNPFEIYGISLKDAKFIHVFALFMIWMDHTADQEEVELGKARLAEVAFEHPLEKTAYAVEGELVLLELLSMLEQIGAEPELFEIVKEKLTQFTDPSKTVAGRLVRAIEQAGSDQQLGAQLAQQYKAQAFERFYALSAFDNMELSTQALLFDVIQKGIHTEILDENDQFLCLKYGDHIEYVKNGNMTSHDSYISPLIMENKVVTKKVLQKAGFNVPQSVEFTSLEKAVASYALFENRAVVIKPKSTNYGLGITIFQQGVQNREDFAKALEIAFREDKEVMVEDYLVGTEYRFFVLGDETLAVLLRVPANVVGDSVHSVAELVAMKNDHPLRGDGSRTPLKKIALGEIEQLQLKEQGLTIDSIPAKDQLVQLRANSNISTGGDSIDMTDEMHESYKQLAVGITKAMGAAVCGVDLIIPDLKQPATPNLTSWGVIEANFNPMMMMHIFPYAGKSRRLTQNVIKMLFPELE.

Residues methionine 1 to alanine 337 are glutamate--cysteine ligase. In terms of domain architecture, ATP-grasp spans lysine 494–phenylalanine 753. Alanine 521–arginine 580 is a binding site for ATP. Residues aspartate 702, glutamate 723, and asparagine 725 each coordinate Mg(2+). The Mn(2+) site is built by aspartate 702, glutamate 723, and asparagine 725.

It in the N-terminal section; belongs to the glutamate--cysteine ligase type 1 family. Type 2 subfamily. Monomer. The cofactor is Mg(2+). Mn(2+) is required as a cofactor.

The enzyme catalyses L-cysteine + L-glutamate + ATP = gamma-L-glutamyl-L-cysteine + ADP + phosphate + H(+). It catalyses the reaction gamma-L-glutamyl-L-cysteine + glycine + ATP = glutathione + ADP + phosphate + H(+). It participates in sulfur metabolism; glutathione biosynthesis; glutathione from L-cysteine and L-glutamate: step 1/2. Its pathway is sulfur metabolism; glutathione biosynthesis; glutathione from L-cysteine and L-glutamate: step 2/2. Synthesizes glutathione from L-glutamate and L-cysteine via gamma-L-glutamyl-L-cysteine. This chain is Glutathione biosynthesis bifunctional protein GshAB, found in Pasteurella multocida (strain Pm70).